A 1163-amino-acid chain; its full sequence is DNA-directed RNA polymerase subunit beta' (1163 aa).

Zn(2+) contacts are provided by Cys59, Cys61, Cys74, and Cys77. Residues Asp449, Asp451, and Asp453 each coordinate Mg(2+). 4 residues coordinate Zn(2+): Cys794, Cys868, Cys875, and Cys878.

The protein belongs to the RNA polymerase beta' chain family. The RNAP catalytic core consists of 2 alpha, 1 beta, 1 beta' and 1 omega subunit. When a sigma factor is associated with the core the holoenzyme is formed, which can initiate transcription. The cofactor is Mg(2+). Zn(2+) is required as a cofactor.

It carries out the reaction RNA(n) + a ribonucleoside 5'-triphosphate = RNA(n+1) + diphosphate. DNA-dependent RNA polymerase catalyzes the transcription of DNA into RNA using the four ribonucleoside triphosphates as substrates. The protein is DNA-directed RNA polymerase subunit beta' of Caldicellulosiruptor saccharolyticus (strain ATCC 43494 / DSM 8903 / Tp8T 6331).